The sequence spans 255 residues: uncharacterized protein (255 aa).

Residues methionine 1 to alanine 18 form the signal peptide.

Belongs to the MlaA family.

This is an uncharacterized protein from Rickettsia bellii (strain RML369-C).